Reading from the N-terminus, the 317-residue chain is Thiamine thiazole synthase (317 aa).

Residues Cys78, 99-100 (EA), Gly107, and Val172 each bind substrate. Cys206 carries the post-translational modification 2,3-didehydroalanine (Cys). Substrate is bound by residues Asp208, His223, Met275, and 285–287 (RMG).

It belongs to the THI4 family. As to quaternary structure, homooctamer. Fe cation serves as cofactor. In terms of processing, during the catalytic reaction, a sulfide is transferred from Cys-206 to a reaction intermediate, generating a dehydroalanine residue.

It is found in the cytoplasm. It localises to the nucleus. It catalyses the reaction [ADP-thiazole synthase]-L-cysteine + glycine + NAD(+) = [ADP-thiazole synthase]-dehydroalanine + ADP-5-ethyl-4-methylthiazole-2-carboxylate + nicotinamide + 3 H2O + 2 H(+). In terms of biological role, involved in biosynthesis of the thiamine precursor thiazole. Catalyzes the conversion of NAD and glycine to adenosine diphosphate 5-(2-hydroxyethyl)-4-methylthiazole-2-carboxylic acid (ADT), an adenylated thiazole intermediate. The reaction includes an iron-dependent sulfide transfer from a conserved cysteine residue of the protein to a thiazole intermediate. The enzyme can only undergo a single turnover, which suggests it is a suicide enzyme. May have additional roles in adaptation to various stress conditions and in DNA damage tolerance. The polypeptide is Thiamine thiazole synthase (Yarrowia lipolytica (strain CLIB 122 / E 150) (Yeast)).